We begin with the raw amino-acid sequence, 587 residues long: Envelope glycoprotein (587 aa).

The first 22 residues, 1 to 22 (MNFNHHFTWSLVIISQIFQVQA), serve as a signal peptide directing secretion. Residues 23 to 527 (GFGDPREALL…TGFHGLLPYV (505 aa)) are Extracellular-facing. N-linked (GlcNAc...) asparagine; by host glycans are attached at residues Asn-120 and Asn-237. The CXXC motif lies at 248 to 251 (CWLC). Intrachain disulfides connect Cys-248–Cys-251, Cys-248–Cys-484, and Cys-476–Cys-483. Asn-266, Asn-271, Asn-277, Asn-280, Asn-295, Asn-308, Asn-322, Asn-328, Asn-340, and Asn-358 each carry an N-linked (GlcNAc...) asparagine; by host glycan. The interval 399-419 (FIPLVIGLGITTAVSTGTAGL) is fusion peptide. 2 coiled-coil regions span residues 420 to 470 (GVSL…LLTA) and 480 to 516 (QEKCCFYANKSGIVRDKIKNLQDDLEKRRKQLIDNPF). The tract at residues 459–475 (LQNRRGLDLLTAEQGGI) is immunosuppression. Positions 476 to 484 (CLALQEKCC) match the CX6CC motif. An N-linked (GlcNAc...) asparagine; by host glycan is attached at Asn-488. Residues 528 to 548 (MPLLGPLLCLLLVLSFGPIIF) form a helical membrane-spanning segment. Over 549 to 587 (NKLMTFIKHQIESIQAKPIQVHYHRLEQEDHGGSYLNLT) the chain is Cytoplasmic. The YXXL motif; contains endocytosis signal motif lies at 571–574 (YHRL).

In terms of assembly, the mature envelope protein (Env) consists of a trimer of SU-TM heterodimers attached by a labile interchain disulfide bond. Specific enzymatic cleavages in vivo yield mature proteins. Envelope glycoproteins are synthesized as an inactive precursor that is N-glycosylated and processed likely by host cell furin or by a furin-like protease in the Golgi to yield the mature SU and TM proteins. The cleavage site between SU and TM requires the minimal sequence [KR]-X-[KR]-R. The R-peptide is released from the C-terminus of the cytoplasmic tail of the TM protein upon particle formation as a result of proteolytic cleavage by the viral protease. Cleavage of this peptide is required for TM to become fusogenic. In terms of processing, the CXXC motif is highly conserved across a broad range of retroviral envelope proteins. It is thought to participate in the formation of a labile disulfide bond possibly with the CX6CC motif present in the transmembrane protein. Isomerization of the intersubunit disulfide bond to an SU intrachain disulfide bond is thought to occur upon receptor recognition in order to allow membrane fusion.

The protein localises to the virion membrane. The protein resides in the host cell membrane. Its function is as follows. The surface protein (SU) attaches the virus to the host cell by binding to its receptor. This interaction triggers the refolding of the transmembrane protein (TM) and is thought to activate its fusogenic potential by unmasking its fusion peptide. Fusion occurs at the host cell plasma membrane. In terms of biological role, the transmembrane protein (TM) acts as a class I viral fusion protein. Under the current model, the protein has at least 3 conformational states: pre-fusion native state, pre-hairpin intermediate state, and post-fusion hairpin state. During viral and target cell membrane fusion, the coiled coil regions (heptad repeats) assume a trimer-of-hairpins structure, positioning the fusion peptide in close proximity to the C-terminal region of the ectodomain. The formation of this structure appears to drive apposition and subsequent fusion of viral and target cell membranes. Membranes fusion leads to delivery of the nucleocapsid into the cytoplasm. This is Envelope glycoprotein (env) from Simian retrovirus SRV-1.